A 258-amino-acid chain; its full sequence is Tryptophan synthase alpha chain (258 aa).

Residues glutamate 52 and aspartate 63 each act as proton acceptor in the active site.

This sequence belongs to the TrpA family. In terms of assembly, tetramer of two alpha and two beta chains.

The catalysed reaction is (1S,2R)-1-C-(indol-3-yl)glycerol 3-phosphate + L-serine = D-glyceraldehyde 3-phosphate + L-tryptophan + H2O. It functions in the pathway amino-acid biosynthesis; L-tryptophan biosynthesis; L-tryptophan from chorismate: step 5/5. In terms of biological role, the alpha subunit is responsible for the aldol cleavage of indoleglycerol phosphate to indole and glyceraldehyde 3-phosphate. The polypeptide is Tryptophan synthase alpha chain (Streptococcus pneumoniae (strain JJA)).